The following is a 369-amino-acid chain: Chorismate synthase (369 aa).

The NADP(+) site is built by Arg-48 and Arg-54. Residues 125–127 (RSS), 238–239 (NA), Gly-283, 298–302 (KPTSS), and Arg-324 each bind FMN.

Belongs to the chorismate synthase family. Homotetramer. FMNH2 is required as a cofactor.

The catalysed reaction is 5-O-(1-carboxyvinyl)-3-phosphoshikimate = chorismate + phosphate. The protein operates within metabolic intermediate biosynthesis; chorismate biosynthesis; chorismate from D-erythrose 4-phosphate and phosphoenolpyruvate: step 7/7. Its function is as follows. Catalyzes the anti-1,4-elimination of the C-3 phosphate and the C-6 proR hydrogen from 5-enolpyruvylshikimate-3-phosphate (EPSP) to yield chorismate, which is the branch point compound that serves as the starting substrate for the three terminal pathways of aromatic amino acid biosynthesis. This reaction introduces a second double bond into the aromatic ring system. This Acidiphilium cryptum (strain JF-5) protein is Chorismate synthase.